Consider the following 137-residue polypeptide: Large ribosomal subunit protein uL14A (137 aa).

N-acetylserine is present on S2. N6,N6-dimethyllysine; by RKM1 is present on residues K106 and K110.

Belongs to the universal ribosomal protein uL14 family. As to quaternary structure, component of the large ribosomal subunit (LSU). Mature yeast ribosomes consist of a small (40S) and a large (60S) subunit. The 40S small subunit contains 1 molecule of ribosomal RNA (18S rRNA) and 33 different proteins (encoded by 57 genes). The large 60S subunit contains 3 rRNA molecules (25S, 5.8S and 5S rRNA) and 46 different proteins (encoded by 81 genes). Methylated by RKM1 at 2 different sites, but it is unclear which are the 2 methylated residues among Lys-40, Lys-106 and/or Lys-110.

It localises to the cytoplasm. Component of the ribosome, a large ribonucleoprotein complex responsible for the synthesis of proteins in the cell. The small ribosomal subunit (SSU) binds messenger RNAs (mRNAs) and translates the encoded message by selecting cognate aminoacyl-transfer RNA (tRNA) molecules. The large subunit (LSU) contains the ribosomal catalytic site termed the peptidyl transferase center (PTC), which catalyzes the formation of peptide bonds, thereby polymerizing the amino acids delivered by tRNAs into a polypeptide chain. The nascent polypeptides leave the ribosome through a tunnel in the LSU and interact with protein factors that function in enzymatic processing, targeting, and the membrane insertion of nascent chains at the exit of the ribosomal tunnel. This chain is Large ribosomal subunit protein uL14A, found in Saccharomyces cerevisiae (strain ATCC 204508 / S288c) (Baker's yeast).